Here is a 497-residue protein sequence, read N- to C-terminus: Probable small intestine urate exporter (497 aa).

N-linked (GlcNAc...) asparagine glycans are attached at residues Asn-47, Asn-56, Asn-66, Asn-75, and Asn-90. The next 10 helical transmembrane spans lie at 149–169 (SFLTLFIPLAANAGVALLIVL), 171–191 (IVQGIAQVMVLTGQYSIWVKW), 203–223 (IAGSGSMLGSFIVLLAGGLLC), 230–250 (YVFYIFGGIGCACCPLWFPLI), 292–312 (LPLWAILVSYFCEYWLFYTIM), 332–352 (ILSALPFVVGCICIILGGLLA), 368–388 (KLFTAIGVLFPSVILVSLPWV), 398–418 (FLVLSSAISSFCESGALVNFL), 431–451 (LLQVFAHIAGAISPTAAGFFI), and 461–481 (NVFLLSAAVNISGLVFYLIFG).

It belongs to the major facilitator superfamily. Sodium/anion cotransporter family. In terms of tissue distribution, abundantly expressed in pancreas, liver, colon and small intestine, less in kidney. Not detected in the adrenal glands, brain, placenta, heart, testis, skeletal muscle, and lungs.

The protein localises to the apical cell membrane. The enzyme catalyses 3 Na(+)(out) + phosphate(out) = 3 Na(+)(in) + phosphate(in). It carries out the reaction urate(out) + n chloride(in) = urate(in) + n chloride(out). The catalysed reaction is L-thyroxine(out) = L-thyroxine(in). It catalyses the reaction 3,3',5-triiodo-L-thyronine(out) = 3,3',5-triiodo-L-thyronine(in). In terms of biological role, acts as a membrane potential-dependent organic anion transporter, the transport requires a low concentration of chloride ions. Mediates chloride-dependent transport of urate. Mediates sodium-independent high affinity transport of thyroid hormones including L-thyroxine (T4) and 3,3',5-triiodo-L-thyronine (T3). Can actively transport inorganic phosphate into cells via Na(+) cotransport. This is Probable small intestine urate exporter (SLC17A4) from Homo sapiens (Human).